A 457-amino-acid polypeptide reads, in one-letter code: MSWSILEFLRKNPEELKNNLKRRAIDVSLVDKAVELDKKWRQVLQEVERLRHQHNVLSSQIPKLSGEERKKKIEESKNLLKILEDKEKELEKIEVERDRLLSSLPNLVADDVPNGPDDSYNIPIKFWGKFKVYEGDVEEFLRQTKDANVNYEIIKWKPKGHAEMLEDVLHLGNTLKAAEIAGSRFYYLFNDIVWLDFALLLFAIDYITQQGYTLVLPPYMLRGEVIQSVIDLDTFKDAIYKIENEDLYLIATAEHSIAAMFFKEEIEKDKLPLKFAGISPAFRKEAGAANKDLKGIFRVHQFHKVEQFIFSTPEDSWKYHAELITNAESIFQQLELPYRIVNIASGDLGACAAKKFDLEVWMPAQAKFREMVSCSNCTDWQAFRMKIRYVDRKNNKRGYVHTLNSTAIASTRTITAILENYQREDGVVEVPKVLRKYLEIFPKAPKDYIYPLKNKII.

Position 252–254 (252–254 (TAE)) interacts with L-serine. Residues 283–285 (RKE) and Val-299 each bind ATP. Glu-306 lines the L-serine pocket. 370–373 (EMVS) provides a ligand contact to ATP. Thr-406 lines the L-serine pocket.

Belongs to the class-II aminoacyl-tRNA synthetase family. Type-1 seryl-tRNA synthetase subfamily. In terms of assembly, homodimer. The tRNA molecule binds across the dimer.

The protein localises to the cytoplasm. The catalysed reaction is tRNA(Ser) + L-serine + ATP = L-seryl-tRNA(Ser) + AMP + diphosphate + H(+). The enzyme catalyses tRNA(Sec) + L-serine + ATP = L-seryl-tRNA(Sec) + AMP + diphosphate + H(+). The protein operates within aminoacyl-tRNA biosynthesis; selenocysteinyl-tRNA(Sec) biosynthesis; L-seryl-tRNA(Sec) from L-serine and tRNA(Sec): step 1/1. In terms of biological role, catalyzes the attachment of serine to tRNA(Ser). Is also able to aminoacylate tRNA(Sec) with serine, to form the misacylated tRNA L-seryl-tRNA(Sec), which will be further converted into selenocysteinyl-tRNA(Sec). This chain is Serine--tRNA ligase, found in Saccharolobus islandicus (strain Y.N.15.51 / Yellowstone #2) (Sulfolobus islandicus).